The following is a 355-amino-acid chain: Ribosomal RNA large subunit methyltransferase M (355 aa).

Residues S183, 216-219 (SPGG), D235, D255, and D271 each bind S-adenosyl-L-methionine. K300 functions as the Proton acceptor in the catalytic mechanism.

It belongs to the class I-like SAM-binding methyltransferase superfamily. RNA methyltransferase RlmE family. RlmM subfamily. In terms of assembly, monomer.

It localises to the cytoplasm. The catalysed reaction is cytidine(2498) in 23S rRNA + S-adenosyl-L-methionine = 2'-O-methylcytidine(2498) in 23S rRNA + S-adenosyl-L-homocysteine + H(+). In terms of biological role, catalyzes the 2'-O-methylation at nucleotide C2498 in 23S rRNA. The polypeptide is Ribosomal RNA large subunit methyltransferase M (Pseudomonas putida (strain W619)).